The following is a 165-amino-acid chain: Methylated-DNA--protein-cysteine methyltransferase (165 aa).

The active-site Nucleophile; methyl group acceptor is the C126.

Belongs to the MGMT family.

It is found in the cytoplasm. It catalyses the reaction a 6-O-methyl-2'-deoxyguanosine in DNA + L-cysteinyl-[protein] = S-methyl-L-cysteinyl-[protein] + a 2'-deoxyguanosine in DNA. It carries out the reaction a 4-O-methyl-thymidine in DNA + L-cysteinyl-[protein] = a thymidine in DNA + S-methyl-L-cysteinyl-[protein]. In terms of biological role, involved in the cellular defense against the biological effects of O6-methylguanine (O6-MeG) and O4-methylthymine (O4-MeT) in DNA. Repairs the methylated nucleobase in DNA by stoichiometrically transferring the methyl group to a cysteine residue in the enzyme. This is a suicide reaction: the enzyme is irreversibly inactivated. The chain is Methylated-DNA--protein-cysteine methyltransferase from Mycobacterium leprae (strain TN).